We begin with the raw amino-acid sequence, 235 residues long: Ribitol-5-phosphate cytidylyltransferase (235 aa).

CTP is bound by residues 7-10 (LAGG), 82-88 (GADRNTS), and serine 113.

It belongs to the IspD/TarI cytidylyltransferase family. TarI subfamily.

It catalyses the reaction D-ribitol 5-phosphate + CTP + H(+) = CDP-L-ribitol + diphosphate. It functions in the pathway cell wall biogenesis; poly(ribitol phosphate) teichoic acid biosynthesis. Its function is as follows. Catalyzes the transfer of the cytidylyl group of CTP to D-ribitol 5-phosphate. The polypeptide is Ribitol-5-phosphate cytidylyltransferase (Streptococcus pneumoniae serotype 2 (strain D39 / NCTC 7466)).